Consider the following 418-residue polypeptide: Queuine tRNA-ribosyltransferase accessory subunit 2 (418 aa).

C325, C327, C330, and H356 together coordinate Zn(2+).

Belongs to the queuine tRNA-ribosyltransferase family. QTRT2 subfamily. As to quaternary structure, heterodimer of a catalytic subunit and an accessory subunit. Zn(2+) serves as cofactor.

Its subcellular location is the cytoplasm. Non-catalytic subunit of the queuine tRNA-ribosyltransferase (TGT) that catalyzes the base-exchange of a guanine (G) residue with queuine (Q) at position 34 (anticodon wobble position) in tRNAs with GU(N) anticodons (tRNA-Asp, -Asn, -His and -Tyr), resulting in the hypermodified nucleoside queuosine (7-(((4,5-cis-dihydroxy-2-cyclopenten-1-yl)amino)methyl)-7-deazaguanosine). This chain is Queuine tRNA-ribosyltransferase accessory subunit 2, found in Drosophila sechellia (Fruit fly).